The primary structure comprises 77 residues: Secapin (77 aa).

The first 32 residues, 1 to 32, serve as a signal peptide directing secretion; the sequence is MKNYSKNATHLITVLLFSFVVILLIIPSKCEA. A propeptide spanning residues 33–52 is cleaved from the precursor; that stretch reads VSNDMQPLEARSADLIPEPR. Cysteine 61 and cysteine 72 form a disulfide bridge.

This sequence belongs to the secapin family. As to expression, expressed by the venom gland.

The protein localises to the secreted. Functionally, nontoxic peptide. The polypeptide is Secapin (Vespa velutina nigrithorax (Hornet)).